Consider the following 502-residue polypeptide: Probable glycine dehydrogenase (decarboxylating) subunit 2 (502 aa).

K273 carries the N6-(pyridoxal phosphate)lysine modification.

The protein belongs to the GcvP family. C-terminal subunit subfamily. As to quaternary structure, the glycine cleavage system is composed of four proteins: P, T, L and H. In this organism, the P 'protein' is a heterodimer of two subunits. Requires pyridoxal 5'-phosphate as cofactor.

The catalysed reaction is N(6)-[(R)-lipoyl]-L-lysyl-[glycine-cleavage complex H protein] + glycine + H(+) = N(6)-[(R)-S(8)-aminomethyldihydrolipoyl]-L-lysyl-[glycine-cleavage complex H protein] + CO2. In terms of biological role, the glycine cleavage system catalyzes the degradation of glycine. The P protein binds the alpha-amino group of glycine through its pyridoxal phosphate cofactor; CO(2) is released and the remaining methylamine moiety is then transferred to the lipoamide cofactor of the H protein. The sequence is that of Probable glycine dehydrogenase (decarboxylating) subunit 2 from Thermococcus kodakarensis (strain ATCC BAA-918 / JCM 12380 / KOD1) (Pyrococcus kodakaraensis (strain KOD1)).